Here is a 544-residue protein sequence, read N- to C-terminus: Methionine--tRNA ligase 2 (544 aa).

A 'HIGH' region motif is present at residues 10–20 (PYANGSLHLGH). Residues Cys-141, Cys-144, Cys-153, and Cys-156 each coordinate Zn(2+). Positions 329-333 (KLSTS) match the 'KMSKS' region motif. Thr-332 serves as a coordination point for ATP.

Belongs to the class-I aminoacyl-tRNA synthetase family. MetG type 1 subfamily. As to quaternary structure, monomer. Zn(2+) serves as cofactor.

The protein localises to the cytoplasm. The catalysed reaction is tRNA(Met) + L-methionine + ATP = L-methionyl-tRNA(Met) + AMP + diphosphate. Is required not only for elongation of protein synthesis but also for the initiation of all mRNA translation through initiator tRNA(fMet) aminoacylation. The polypeptide is Methionine--tRNA ligase 2 (Bacillus cereus (strain ATCC 14579 / DSM 31 / CCUG 7414 / JCM 2152 / NBRC 15305 / NCIMB 9373 / NCTC 2599 / NRRL B-3711)).